A 402-amino-acid chain; its full sequence is MKISLFGYGKTTRAIAENLVDKFGPFDIYDDHFTETKKDTLGNLLLNPNDFDDNLSDIEIPSPGFPPKHKLIQKAKNLQSEYDFFYDIMPKSVWISGTNGKTTTTQMATHLLSHIGAVIGGNVGTPLAELDPYAKLWILETSSFTLHYTHKAKPEIYALLPISPDHLSWHGSFDNYVQDKLSVLKRMNECDVVILPKIYANTPTKAHKISYKDEKDLAVKFGIDTEKISFKSPFLLDAIMALAIEKILLDTLSYELLNSFVMEKNKLEELKDSQNRLWVNDTKATNESAVMAALNRYKDKKIHLIIGGDDKGVDLSNLFDFMKNFNIELYAIGISTEKMLDYAKKANLKAYKCEVLSKAVNEISNHLRVNEVALLSPACASLDQFNSYVERGKVFKECVNKI.

Glycine 97–threonine 103 is an ATP binding site.

The protein belongs to the MurCDEF family.

It is found in the cytoplasm. It carries out the reaction UDP-N-acetyl-alpha-D-muramoyl-L-alanine + D-glutamate + ATP = UDP-N-acetyl-alpha-D-muramoyl-L-alanyl-D-glutamate + ADP + phosphate + H(+). It functions in the pathway cell wall biogenesis; peptidoglycan biosynthesis. Its function is as follows. Cell wall formation. Catalyzes the addition of glutamate to the nucleotide precursor UDP-N-acetylmuramoyl-L-alanine (UMA). In Campylobacter jejuni subsp. jejuni serotype O:6 (strain 81116 / NCTC 11828), this protein is UDP-N-acetylmuramoylalanine--D-glutamate ligase.